The sequence spans 181 residues: Cyclic AMP-dependent transcription factor ATF-3 (181 aa).

Residues 76 to 97 (VTKAEVAPEEDERKKRRRERNK) form a disordered region. Lys78 is covalently cross-linked (Glycyl lysine isopeptide (Lys-Gly) (interchain with G-Cter in SUMO2)). Residues 86–149 (DERKKRRRER…QHLIYMLNLH (64 aa)) enclose the bZIP domain. Residues 88-110 (RKKRRRERNKIAAAKCRNKKKEK) form a basic motif region. The tract at residues 114–142 (LQKESEKLESVNAELKAQIEELKNEKQHL) is leucine-zipper. Thr162 is subject to Phosphothreonine. Residue Lys175 forms a Glycyl lysine isopeptide (Lys-Gly) (interchain with G-Cter in SUMO2) linkage.

This sequence belongs to the bZIP family. ATF subfamily. In terms of assembly, binds DNA as a homodimer or a heterodimer. Interacts with KAT5; promoting KAT5 autoacetylation and KAT5 deubiquitination by USP7.

It localises to the nucleus. In terms of biological role, this protein binds the cAMP response element (CRE) (consensus: 5'-GTGACGT[AC][AG]-3'), a sequence present in many viral and cellular promoters. Represses transcription from promoters with ATF sites. It may repress transcription by stabilizing the binding of inhibitory cofactors at the promoter. The chain is Cyclic AMP-dependent transcription factor ATF-3 (ATF3) from Bos taurus (Bovine).